The primary structure comprises 170 residues: 6,7-dimethyl-8-ribityllumazine synthase (170 aa).

5-amino-6-(D-ribitylamino)uracil is bound by residues Trp-25, 57 to 59 (AVE), and 79 to 81 (AVI). 84–85 (DT) provides a ligand contact to (2S)-2-hydroxy-3-oxobutyl phosphate. The active-site Proton donor is His-87. Asn-112 contributes to the 5-amino-6-(D-ribitylamino)uracil binding site. Residue Arg-126 participates in (2S)-2-hydroxy-3-oxobutyl phosphate binding.

Belongs to the DMRL synthase family.

The catalysed reaction is (2S)-2-hydroxy-3-oxobutyl phosphate + 5-amino-6-(D-ribitylamino)uracil = 6,7-dimethyl-8-(1-D-ribityl)lumazine + phosphate + 2 H2O + H(+). Its pathway is cofactor biosynthesis; riboflavin biosynthesis; riboflavin from 2-hydroxy-3-oxobutyl phosphate and 5-amino-6-(D-ribitylamino)uracil: step 1/2. Catalyzes the formation of 6,7-dimethyl-8-ribityllumazine by condensation of 5-amino-6-(D-ribitylamino)uracil with 3,4-dihydroxy-2-butanone 4-phosphate. This is the penultimate step in the biosynthesis of riboflavin. The sequence is that of 6,7-dimethyl-8-ribityllumazine synthase from Thermobifida fusca (strain YX).